A 204-amino-acid chain; its full sequence is Thymidylate kinase (204 aa).

Residue 13 to 20 (GIDGSGKS) coordinates ATP.

It belongs to the thymidylate kinase family.

The catalysed reaction is dTMP + ATP = dTDP + ADP. Its function is as follows. Phosphorylation of dTMP to form dTDP in both de novo and salvage pathways of dTTP synthesis. In Leptospira interrogans serogroup Icterohaemorrhagiae serovar copenhageni (strain Fiocruz L1-130), this protein is Thymidylate kinase.